The following is a 552-amino-acid chain: Glutamyl-tRNA reductase 1, chloroplastic (552 aa).

Residues 150-153 (TCNR), S210, 215-217 (EGQ), and Q221 each bind substrate. C151 acts as the Nucleophile in catalysis. 292–297 (GAGKMG) is a binding site for NADP(+).

The protein belongs to the glutamyl-tRNA reductase family. As to expression, primarily in cotyledons and hypocotyls of greening cucumber seedlings.

Its subcellular location is the plastid. The protein resides in the chloroplast. The catalysed reaction is (S)-4-amino-5-oxopentanoate + tRNA(Glu) + NADP(+) = L-glutamyl-tRNA(Glu) + NADPH + H(+). Its pathway is porphyrin-containing compound metabolism; protoporphyrin-IX biosynthesis; 5-aminolevulinate from L-glutamyl-tRNA(Glu): step 1/2. Catalyzes the NADPH-dependent reduction of glutamyl-tRNA(Glu) to glutamate 1-semialdehyde (GSA). This is Glutamyl-tRNA reductase 1, chloroplastic (HEMA1) from Cucumis sativus (Cucumber).